Here is a 412-residue protein sequence, read N- to C-terminus: Gamma-glutamyl phosphate reductase (412 aa).

This sequence belongs to the gamma-glutamyl phosphate reductase family.

Its subcellular location is the cytoplasm. The enzyme catalyses L-glutamate 5-semialdehyde + phosphate + NADP(+) = L-glutamyl 5-phosphate + NADPH + H(+). It functions in the pathway amino-acid biosynthesis; L-proline biosynthesis; L-glutamate 5-semialdehyde from L-glutamate: step 2/2. Functionally, catalyzes the NADPH-dependent reduction of L-glutamate 5-phosphate into L-glutamate 5-semialdehyde and phosphate. The product spontaneously undergoes cyclization to form 1-pyrroline-5-carboxylate. This Bartonella henselae (strain ATCC 49882 / DSM 28221 / CCUG 30454 / Houston 1) (Rochalimaea henselae) protein is Gamma-glutamyl phosphate reductase.